Reading from the N-terminus, the 174-residue chain is Large ribosomal subunit protein uL22 (174 aa).

Belongs to the universal ribosomal protein uL22 family. As to quaternary structure, part of the 50S ribosomal subunit.

This protein binds specifically to 23S rRNA. It makes multiple contacts with different domains of the 23S rRNA in the assembled 50S subunit and ribosome. Its function is as follows. The globular domain of the protein is located near the polypeptide exit tunnel on the outside of the subunit, while an extended beta-hairpin is found that lines the wall of the exit tunnel in the center of the 70S ribosome. This chain is Large ribosomal subunit protein uL22, found in Nanoarchaeum equitans (strain Kin4-M).